The chain runs to 351 residues: Sesquiterpene synthase 14 (351 aa).

Residues Asp-87, Asn-223, Ser-227, and Glu-231 each coordinate Mg(2+). A DDXXD motif motif is present at residues 87-91 (DEYTD). Positions 223–231 (NDIASYNKE) match the NSE/DTE motif motif. Residues Arg-312 and Tyr-313 each contribute to the (2E,6E)-farnesyl diphosphate site.

This sequence belongs to the terpene synthase family. It depends on Mg(2+) as a cofactor.

It catalyses the reaction (2E,6E)-farnesyl diphosphate = pentalenene + diphosphate. Functionally, terpene cyclase that catalyzes the cyclization of farnesyl diphosphate (FPP) to pentalenene as a major product, as well as caryophyllene. In Postia placenta (strain ATCC 44394 / Madison 698-R) (Brown rot fungus), this protein is Sesquiterpene synthase 14.